Reading from the N-terminus, the 225-residue chain is Receptor-transporting protein 2 (225 aa).

Residues 1 to 196 lie on the Cytoplasmic side of the membrane; sequence MCTSLTTCEW…RAQAGSGYNF (196 aa). Residues 52–161 form a 3CxxC-type zinc finger; the sequence is ASGRFHCSWC…AEFCEACQEG (110 aa). The helical transmembrane segment at 197 to 219 threads the bilayer; it reads LSLRWCLFWASLCLLVVYLQFSF. Residues 220 to 225 lie on the Extracellular side of the membrane; the sequence is LSPAFF.

Belongs to the TMEM7 family. As to quaternary structure, interacts with olfactory receptors. Expressed in circumvallate papillae and testis.

It is found in the cell membrane. In terms of biological role, specifically promotes functional cell surface expression of olfactory receptors, but not of other GPCRs. This Homo sapiens (Human) protein is Receptor-transporting protein 2 (RTP2).